The chain runs to 841 residues: Translation initiation factor IF-2 (841 aa).

Composition is skewed to basic and acidic residues over residues 1 to 12, 50 to 92, 114 to 170, 188 to 202, and 213 to 235; these read MSDNEIKNEAPK, EAAL…EATK, EQPK…REEA, READ…EANR, and KKGD…DVKG. Disordered regions lie at residues 1-24 and 50-246; these read MSDN…KTTV and EAAL…GSAL. The tr-type G domain occupies 340-510; it reads TRAPVVTIMG…LLQSEVLELT (171 aa). The tract at residues 349–356 is G1; the sequence is GHVDHGKT. 349–356 contacts GTP; the sequence is GHVDHGKT. The tract at residues 374–378 is G2; it reads GITQH. Residues 396 to 399 form a G3 region; the sequence is DTPG. GTP contacts are provided by residues 396–400 and 450–453; these read DTPGH and NKID. Residues 450–453 form a G4 region; it reads NKID. Positions 486 to 488 are G5; that stretch reads SAK.

The protein belongs to the TRAFAC class translation factor GTPase superfamily. Classic translation factor GTPase family. IF-2 subfamily.

The protein resides in the cytoplasm. One of the essential components for the initiation of protein synthesis. Protects formylmethionyl-tRNA from spontaneous hydrolysis and promotes its binding to the 30S ribosomal subunits. Also involved in the hydrolysis of GTP during the formation of the 70S ribosomal complex. This chain is Translation initiation factor IF-2, found in Actinobacillus pleuropneumoniae serotype 3 (strain JL03).